The primary structure comprises 96 residues: Antigen H4 (96 aa).

The segment at 1–20 (EFQEEIKEGVEEHKHEDDPE) is disordered. A glycan (N-linked (GlcNAc...) asparagine) is linked at Asn34.

The chain is Antigen H4 (H4) from Toxoplasma gondii.